Consider the following 88-residue polypeptide: Small ribosomal subunit protein bS20 (88 aa).

The interval 1-33 (MANTSSAKKATRKIARRTAVNKSRRTQMRGSVR) is disordered.

The protein belongs to the bacterial ribosomal protein bS20 family.

Binds directly to 16S ribosomal RNA. The sequence is that of Small ribosomal subunit protein bS20 from Rhodopseudomonas palustris (strain BisB5).